The following is a 605-amino-acid chain: Class II receptor tyrosine kinase (605 aa).

The Ig-like C2-type domain occupies 1-67 (MWSSPGRNLE…DGESASFRVD (67 aa)). Residues 1-84 (MWSSPGRNLE…GSNSGVIAGV (84 aa)) are Extracellular-facing. N26, N44, and N72 each carry an N-linked (GlcNAc...) asparagine glycan. A helical transmembrane segment spans residues 85-105 (LITLLLLIALIIILICVFWVV). Residues 106-605 (WRYRRRGKFD…GRPRGVAGCV (500 aa)) are Cytoplasmic-facing. The tract at residues 209 to 230 (EELSPIQEKPTRRNTGLSTYSQ) is disordered. Positions 221–230 (RNTGLSTYSQ) are enriched in polar residues. The Protein kinase domain maps to 346–605 (IREVKQIGVG…GRPRGVAGCV (260 aa)). ATP-binding positions include 352 to 360 (IGVGQFGAV) and K393. D496 serves as the catalytic Proton acceptor. Y527 bears the Phosphotyrosine; by autocatalysis mark.

Belongs to the protein kinase superfamily. Tyr protein kinase family. Insulin receptor subfamily. Phosphorylated.

Its subcellular location is the cell membrane. The enzyme catalyses L-tyrosyl-[protein] + ATP = O-phospho-L-tyrosyl-[protein] + ADP + H(+). In Geodia cydonium (Sponge), this protein is Class II receptor tyrosine kinase (TK).